Here is a 625-residue protein sequence, read N- to C-terminus: MAGDRLPRKVMDAKKLASLLRGGPGGPLVIDSRSFVEYNSWHVLSSVNICCSKLVKRRLQQGKVTIAELIQPAARSQVEATEPQDVVVYDQSTRDASVLAADSFLSILLSKLDGCFDSVAILTGGFATFSSCFPGLCEGKPAALLPMSLSQPCLPVPSVGLTRILPHLYLGSQKDVLNKDLMTQNGISYVLNASNSCPKPDFICESRFMRVPINDNYCEKLLPWLDKSIEFIDKAKLSSCQVIVHCLAGISRSATIAIAYIMKTMGMSSDDAYRFVKDRRPSISPNFNFLGQLLEYERSLKLLAALQGDPGTPSGTPEPPPSPAAGAPLPRLPPPTSESAATGNAAAREGGLSAGGEPPAPPTPPATSALQQGLRGLHLSSDRLQDTNRLKRSFSLDIKSAYAPSRRPDGPGPPDPGEAPKLCKLDSPSGAALGLSSPSPDSPDAAPEARPRPRRRPRPPAGSPARSPAHSLGLNFGDAARQTPRHGLSALSAPGLPGPGQPAGPGAWAPPLDSPGTPSPDGPWCFSPEGAQGAGGVLFAPFGRAGAPGPGGGSDLRRREAARAEPRDARTGWPEEPAPETQFKRRSCQMEFEEGMVEGRARGEELAALGKQASFSGSVEVIEVS.

Residues 23-138 form the Rhodanese domain; that stretch reads GPGGPLVIDS…FSSCFPGLCE (116 aa). The 143-residue stretch at 160 to 302 folds into the Tyrosine-protein phosphatase domain; the sequence is GLTRILPHLY…LLEYERSLKL (143 aa). Cysteine 246 (phosphocysteine intermediate) is an active-site residue. A disordered region spans residues 306-586; it reads LQGDPGTPSG…PAPETQFKRR (281 aa). Residues 380 to 389 are compositionally biased toward basic and acidic residues; it reads SSDRLQDTNR. Residues 431 to 448 are compositionally biased toward low complexity; it reads AALGLSSPSPDSPDAAPE. The span at 555-570 shows a compositional bias: basic and acidic residues; sequence DLRRREAARAEPRDAR.

It belongs to the protein-tyrosine phosphatase family. Non-receptor class dual specificity subfamily. Monomer. Abundant in brain, heart and skeletal muscle.

Its subcellular location is the cytoplasm. The protein resides in the nucleus. The enzyme catalyses O-phospho-L-tyrosyl-[protein] + H2O = L-tyrosyl-[protein] + phosphate. It catalyses the reaction O-phospho-L-seryl-[protein] + H2O = L-seryl-[protein] + phosphate. It carries out the reaction O-phospho-L-threonyl-[protein] + H2O = L-threonyl-[protein] + phosphate. In terms of biological role, has phosphatase activity with synthetic phosphatase substrates and negatively regulates mitogen-activated protein kinase activity, presumably by catalysing their dephosphorylation. Expected to display protein phosphatase activity toward phosphotyrosine, phosphoserine and phosphothreonine residues. In Homo sapiens (Human), this protein is Dual specificity protein phosphatase 8 (DUSP8).